The chain runs to 517 residues: Ribonuclease Y (517 aa).

A helical transmembrane segment spans residues 1 to 21; it reads MIEVLIGLGAGVVGVGAGYLY. The KH domain occupies 207 to 273; sequence LINVVNIKND…TRVIELLVED (67 aa). Residues 333 to 426 form the HD domain; it reads ALAHSLEVAH…VCAADALSAA (94 aa).

It belongs to the RNase Y family.

The protein localises to the cell membrane. Functionally, endoribonuclease that initiates mRNA decay. The protein is Ribonuclease Y of Campylobacter concisus (strain 13826).